We begin with the raw amino-acid sequence, 242 residues long: Argininosuccinate synthase (242 aa).

This sequence belongs to the argininosuccinate synthase family. Type 2 subfamily. In terms of assembly, homotetramer.

Its subcellular location is the cytoplasm. It catalyses the reaction L-citrulline + L-aspartate + ATP = 2-(N(omega)-L-arginino)succinate + AMP + diphosphate + H(+). The protein operates within amino-acid biosynthesis; L-arginine biosynthesis; L-arginine from L-ornithine and carbamoyl phosphate: step 2/3. The protein is Argininosuccinate synthase (argG) of Dickeya chrysanthemi (Pectobacterium chrysanthemi).